The following is an 82-amino-acid chain: ATP synthase subunit c (82 aa).

Helical transmembrane passes span 7-27 (FVAL…CIGI) and 53-73 (FLLA…AMMF).

Belongs to the ATPase C chain family. In terms of assembly, F-type ATPases have 2 components, F(1) - the catalytic core - and F(0) - the membrane proton channel. F(1) has five subunits: alpha(3), beta(3), gamma(1), delta(1), epsilon(1). F(0) has three main subunits: a(1), b(2) and c(10-14). The alpha and beta chains form an alternating ring which encloses part of the gamma chain. F(1) is attached to F(0) by a central stalk formed by the gamma and epsilon chains, while a peripheral stalk is formed by the delta and b chains.

Its subcellular location is the cell inner membrane. Functionally, f(1)F(0) ATP synthase produces ATP from ADP in the presence of a proton or sodium gradient. F-type ATPases consist of two structural domains, F(1) containing the extramembraneous catalytic core and F(0) containing the membrane proton channel, linked together by a central stalk and a peripheral stalk. During catalysis, ATP synthesis in the catalytic domain of F(1) is coupled via a rotary mechanism of the central stalk subunits to proton translocation. Key component of the F(0) channel; it plays a direct role in translocation across the membrane. A homomeric c-ring of between 10-14 subunits forms the central stalk rotor element with the F(1) delta and epsilon subunits. The polypeptide is ATP synthase subunit c (Aromatoleum aromaticum (strain DSM 19018 / LMG 30748 / EbN1) (Azoarcus sp. (strain EbN1))).